A 418-amino-acid polypeptide reads, in one-letter code: Nuclear hormone receptor family member nhr-209 (418 aa).

Residues 43-121 (PEKCAVCKNA…VGMDSTAIRA (79 aa)) constitute a DNA-binding region (nuclear receptor). 2 consecutive NR C4-type zinc fingers follow at residues 46–66 (CAVCKNAAIGYHYNVPSCNGC) and 82–104 (CMNHKNCLDEIESDESQRLCKGC). The region spanning 174 to 414 (TIPDGFEDMR…SHPPKSLFDE (241 aa)) is the NR LBD domain. An AF-2 region spans residues 403 to 414 (ECSHPPKSLFDE).

The protein belongs to the nuclear hormone receptor family.

The protein localises to the nucleus. In terms of biological role, transcriptional regulator. Plays a role in modulation of lifespan and immunity. In Caenorhabditis elegans, this protein is Nuclear hormone receptor family member nhr-209.